Consider the following 371-residue polypeptide: Putative phosphoserine aminotransferase (371 aa).

Arg-45 provides a ligand contact to L-glutamate. Pyridoxal 5'-phosphate-binding residues include Phe-103, Thr-149, Asp-171, and Gln-194. Lys-195 is subject to N6-(pyridoxal phosphate)lysine. Asn-246–Thr-247 is a pyridoxal 5'-phosphate binding site.

This sequence belongs to the class-V pyridoxal-phosphate-dependent aminotransferase family. SerC subfamily. As to quaternary structure, homodimer. The cofactor is pyridoxal 5'-phosphate.

It localises to the cytoplasm. It catalyses the reaction O-phospho-L-serine + 2-oxoglutarate = 3-phosphooxypyruvate + L-glutamate. The enzyme catalyses 4-(phosphooxy)-L-threonine + 2-oxoglutarate = (R)-3-hydroxy-2-oxo-4-phosphooxybutanoate + L-glutamate. The protein operates within amino-acid biosynthesis; L-serine biosynthesis; L-serine from 3-phospho-D-glycerate: step 2/3. Its pathway is cofactor biosynthesis; pyridoxine 5'-phosphate biosynthesis; pyridoxine 5'-phosphate from D-erythrose 4-phosphate: step 3/5. In terms of biological role, catalyzes the reversible conversion of 3-phosphohydroxypyruvate to phosphoserine and of 3-hydroxy-2-oxo-4-phosphonooxybutanoate to phosphohydroxythreonine. The chain is Putative phosphoserine aminotransferase from Mycolicibacterium vanbaalenii (strain DSM 7251 / JCM 13017 / BCRC 16820 / KCTC 9966 / NRRL B-24157 / PYR-1) (Mycobacterium vanbaalenii).